A 526-amino-acid chain; its full sequence is Probable Xaa-Pro aminopeptidase MGG_05684 (526 aa).

The Mn(2+) site is built by Asp285, Asp296, Glu447, and Glu488.

Belongs to the peptidase M24B family. Mn(2+) serves as cofactor.

It carries out the reaction Release of any N-terminal amino acid, including proline, that is linked to proline, even from a dipeptide or tripeptide.. In terms of biological role, catalyzes the removal of a penultimate prolyl residue from the N-termini of peptides. This chain is Probable Xaa-Pro aminopeptidase MGG_05684, found in Pyricularia oryzae (strain 70-15 / ATCC MYA-4617 / FGSC 8958) (Rice blast fungus).